The sequence spans 157 residues: SsrA-binding protein (157 aa).

It belongs to the SmpB family.

It localises to the cytoplasm. Functionally, required for rescue of stalled ribosomes mediated by trans-translation. Binds to transfer-messenger RNA (tmRNA), required for stable association of tmRNA with ribosomes. tmRNA and SmpB together mimic tRNA shape, replacing the anticodon stem-loop with SmpB. tmRNA is encoded by the ssrA gene; the 2 termini fold to resemble tRNA(Ala) and it encodes a 'tag peptide', a short internal open reading frame. During trans-translation Ala-aminoacylated tmRNA acts like a tRNA, entering the A-site of stalled ribosomes, displacing the stalled mRNA. The ribosome then switches to translate the ORF on the tmRNA; the nascent peptide is terminated with the 'tag peptide' encoded by the tmRNA and targeted for degradation. The ribosome is freed to recommence translation, which seems to be the essential function of trans-translation. The chain is SsrA-binding protein from Christiangramia forsetii (strain DSM 17595 / CGMCC 1.15422 / KT0803) (Gramella forsetii).